The following is a 188-amino-acid chain: Large ribosomal subunit protein uL22 (188 aa).

The tract at residues 155-188 is disordered; sequence STPEGAKKGKKKKGTKDAVEKSSKRVKTAATAAH.

The protein belongs to the universal ribosomal protein uL22 family.

The polypeptide is Large ribosomal subunit protein uL22 (RpL17) (Agriotes lineatus (Lined click beetle)).